Here is a 189-residue protein sequence, read N- to C-terminus: GTP cyclohydrolase 1 (189 aa).

Residues C78, H81, and C150 each contribute to the Zn(2+) site.

The protein belongs to the GTP cyclohydrolase I family. Toroid-shaped homodecamer, composed of two pentamers of five dimers.

It catalyses the reaction GTP + H2O = 7,8-dihydroneopterin 3'-triphosphate + formate + H(+). It participates in cofactor biosynthesis; 7,8-dihydroneopterin triphosphate biosynthesis; 7,8-dihydroneopterin triphosphate from GTP: step 1/1. The polypeptide is GTP cyclohydrolase 1 (Listeria innocua serovar 6a (strain ATCC BAA-680 / CLIP 11262)).